We begin with the raw amino-acid sequence, 148 residues long: Ubiquitin-conjugating enzyme E2 29 (148 aa).

The 147-residue stretch at 1–147 (MATRRILKEL…ARSWTQKYAL (147 aa)) folds into the UBC core domain. Residue C85 is the Glycyl thioester intermediate of the active site.

This sequence belongs to the ubiquitin-conjugating enzyme family.

It carries out the reaction S-ubiquitinyl-[E1 ubiquitin-activating enzyme]-L-cysteine + [E2 ubiquitin-conjugating enzyme]-L-cysteine = [E1 ubiquitin-activating enzyme]-L-cysteine + S-ubiquitinyl-[E2 ubiquitin-conjugating enzyme]-L-cysteine.. It participates in protein modification; protein ubiquitination. In terms of biological role, accepts the ubiquitin from the E1 complex and catalyzes its covalent attachment to other proteins. The polypeptide is Ubiquitin-conjugating enzyme E2 29 (UBC29) (Arabidopsis thaliana (Mouse-ear cress)).